The following is a 280-amino-acid chain: Thymidylate synthase (280 aa).

Position 21 (Arg-21) interacts with dUMP. Residue His-51 coordinates (6R)-5,10-methylene-5,6,7,8-tetrahydrofolate. 142–143 is a binding site for dUMP; sequence RR. Catalysis depends on Cys-162, which acts as the Nucleophile. DUMP is bound by residues 182–185, Asn-193, and 223–225; these read RSAD and HLY. Asp-185 serves as a coordination point for (6R)-5,10-methylene-5,6,7,8-tetrahydrofolate. Ala-279 serves as a coordination point for (6R)-5,10-methylene-5,6,7,8-tetrahydrofolate.

The protein belongs to the thymidylate synthase family. Bacterial-type ThyA subfamily. In terms of assembly, homodimer.

Its subcellular location is the cytoplasm. The enzyme catalyses dUMP + (6R)-5,10-methylene-5,6,7,8-tetrahydrofolate = 7,8-dihydrofolate + dTMP. Its pathway is pyrimidine metabolism; dTTP biosynthesis. Catalyzes the reductive methylation of 2'-deoxyuridine-5'-monophosphate (dUMP) to 2'-deoxythymidine-5'-monophosphate (dTMP) while utilizing 5,10-methylenetetrahydrofolate (mTHF) as the methyl donor and reductant in the reaction, yielding dihydrofolate (DHF) as a by-product. This enzymatic reaction provides an intracellular de novo source of dTMP, an essential precursor for DNA biosynthesis. The protein is Thymidylate synthase of Acinetobacter baylyi (strain ATCC 33305 / BD413 / ADP1).